The chain runs to 332 residues: CXADR-like membrane protein (332 aa).

An N-terminal signal peptide occupies residues 1 to 19 (MHTLIRSFLGLWYVLGALA). 2 consecutive Ig-like C2-type domains span residues 20–123 (QTEI…SFIT) and 130–220 (PSEL…VDVT). Over 20 to 231 (QTEIKLVADE…QSVSNTGILA (212 aa)) the chain is Extracellular. 2 disulfide bridges follow: Cys-35–Cys-109 and Cys-151–Cys-204. A glycan (N-linked (GlcNAc...) asparagine) is linked at Asn-193. A helical membrane pass occupies residues 232–252 (GVACGVVVGVFLIFFTVWLLF). Residues 253–332 (HKKEFKKREE…EQRHHCLEKI (80 aa)) lie on the Cytoplasmic side of the membrane. The disordered stretch occupies residues 276 to 332 (PKARLVKPGSSSSDSRSSQSGSSSTRSTTNSASRSQRTHSTQETPHGEQRHHCLEKI). Low complexity predominate over residues 285–310 (SSSSDSRSSQSGSSSTRSTTNSASRS). Residues 320 to 332 (PHGEQRHHCLEKI) are compositionally biased toward basic and acidic residues.

Its subcellular location is the cell junction. It is found in the tight junction. It localises to the cell membrane. This is CXADR-like membrane protein (clmp) from Xenopus tropicalis (Western clawed frog).